A 467-amino-acid chain; its full sequence is Serine/threonine-protein kinase AFC1 (467 aa).

A Protein kinase domain is found at 115–443 (YQILSKMGEG…AREALNHPFF (329 aa)). Residues 121–129 (MGEGTFGQV) and K144 each bind ATP. D240 serves as the catalytic Proton acceptor. A disordered region spans residues 447-467 (REQSIPPFNPNPHPFLYNQKN).

Belongs to the protein kinase superfamily. CMGC Ser/Thr protein kinase family. Lammer subfamily.

It catalyses the reaction L-seryl-[protein] + ATP = O-phospho-L-seryl-[protein] + ADP + H(+). The enzyme catalyses L-threonyl-[protein] + ATP = O-phospho-L-threonyl-[protein] + ADP + H(+). The catalysed reaction is L-tyrosyl-[protein] + ATP = O-phospho-L-tyrosyl-[protein] + ADP + H(+). Functionally, activator of yeast transcription factor, STE12. The protein is Serine/threonine-protein kinase AFC1 (AFC1) of Arabidopsis thaliana (Mouse-ear cress).